Reading from the N-terminus, the 1077-residue chain is MKDIGEQLYTTQVNGGPSSLTMSPKQPNRATRTERQEAQTLLYQGSEAEAATMTIATCVQCKSVHKIPTQDLRKGPGQSQDTYVCFKCSLRAVPTQLHFVNNNAGAAHVRNETETISSPVNKFKVRNFKPGKYYCDKCRFSTKDPLQYRKHTLQHEEIRFICSHCSYISYTKGEFQRHLVKHTGIFPYRCEYCDYGAIRNDYIVKHRRRVHERAGAKRPFKTVAKLEPKRTSIPKQSMELSKGPSPRAAFQNKLSDQLSRFSLHANKDKTHNLMLLPELKKYQKDVVCIPNKVTLSEPREVSLLGNKNVEVEVLSPSKEPVHPGMPLTVMAPSELVVPTNCLAQLMDVKVVNGAQQLVLKLFPLEENARLETSRGDGGTSECLSTEKGSGGQKKMLSPEASRSLAVEGNAGDFVGLDRLHSLVQKQLKNVKWVKSCNFFMPNSGVHSQQESFLGSDTIKELQKSHSLCPPRALPSAAIKSHSPASVQNSVPYGPGATVSHFLSKAAVAFADDRRGARSNSQQLLPLASLPSKVPFSGEKGLLPIGESDLEARNRISRPETLVSSDRKLEDKQMESKAVGNTGQVSSVQNKEYLHINITGEDKPRSQQPGDQPGQPKTSETAGATFEGPIISSVFSLSSGSENVPEAIKWNSSTTKIKSIELLRRKIAQLIESCGKPSSLSANSAQRRSIGQAPKLTSKATPKAIQEMSVSLTGPGPTPGPSVGPLQKPPNEDSITGSRQLVPQQVCPQFISANDGKMENRVTRKTPVATPVLIPKGAVLRVLNSSEDAHIIEATCDTPVSIPCSEAQLAGTLPFCPMKQTGSGSQPLTCRSGPADMSPGLETSLRPKSRKEDTICSATAKKMVPVYSTAPGSSDSIRQGRPVSRNLTVSKNKTKQVNSTKKKNKMQANPGRYFKDPPSFFQVARQLRLIAAKPDQLIKCPRRNQPVIVLNHPDVDSPEVTNVMKVINKYKGNVLKVVLSERTRCQLGVRRYHMRLTYQNVAETNHMKRQMMLKMKLKKVHKNNYQVVGSMPDDPAQCVFKCWFCGRLYEDQEEWMSHGQRHLIEATRDWDVLSSKGK.

Over residues 9–30 (YTTQVNGGPSSLTMSPKQPNRA) the composition is skewed to polar residues. Residues 9 to 35 (YTTQVNGGPSSLTMSPKQPNRATRTER) are disordered. C2H2-type zinc fingers lie at residues 160–182 (FICSHCSYISYTKGEFQRHLVKH) and 188–211 (YRCEYCDYGAIRNDYIVKHRRRVH). A disordered region spans residues 372–397 (TSRGDGGTSECLSTEKGSGGQKKMLS). K479 participates in a covalent cross-link: Glycyl lysine isopeptide (Lys-Gly) (interchain with G-Cter in SUMO2). 4 disordered regions span residues 561–585 (LVSSDRKLEDKQMESKAVGNTGQVS), 599–622 (GEDKPRSQQPGDQPGQPKTSETAG), 675–739 (KPSS…GSRQ), and 825–852 (QPLTCRSGPADMSPGLETSLRPKSRKED). Residues 564-574 (SDRKLEDKQME) show a composition bias toward basic and acidic residues. 2 stretches are compositionally biased toward polar residues: residues 605–621 (SQQPGDQPGQPKTSETA) and 675–688 (KPSSLSANSAQRRS). Residues K847 and K861 each participate in a glycyl lysine isopeptide (Lys-Gly) (interchain with G-Cter in SUMO2) cross-link. The disordered stretch occupies residues 895–914 (QVNSTKKKNKMQANPGRYFK). The C2H2-type 3 zinc-finger motif lies at 1039-1061 (FKCWFCGRLYEDQEEWMSHGQRH).

Belongs to the krueppel C2H2-type zinc-finger protein family.

Its subcellular location is the nucleus. In terms of biological role, through its association with the EHMT1-EHMT2/G9A and PRC2/EED-EZH2 histone methyltransferase complexes may function in gene silencing, regulating repressive post-translational methylation of histone tails at promoters of target genes. The chain is Zinc finger protein 518B (Znf518b) from Mus musculus (Mouse).